The primary structure comprises 345 residues: NADH-ubiquinone oxidoreductase chain 2 (345 aa).

Transmembrane regions (helical) follow at residues 1–21 (MNPI…VLTM), 60–80 (FLIQ…NAHL), 110–130 (PIHF…ALII), 149–169 (IPTP…GLGG), 179–196 (MAFS…IITI), 200–222 (LTLF…MHLT), 240–260 (TANL…LSGF), 274–294 (NLVP…MFYL), and 323–343 (TTML…TPTM).

This sequence belongs to the complex I subunit 2 family.

It localises to the mitochondrion inner membrane. The catalysed reaction is a ubiquinone + NADH + 5 H(+)(in) = a ubiquinol + NAD(+) + 4 H(+)(out). Functionally, core subunit of the mitochondrial membrane respiratory chain NADH dehydrogenase (Complex I) that is believed to belong to the minimal assembly required for catalysis. Complex I functions in the transfer of electrons from NADH to the respiratory chain. The immediate electron acceptor for the enzyme is believed to be ubiquinone. The sequence is that of NADH-ubiquinone oxidoreductase chain 2 (MT-ND2) from Varanus melinus (Quince monitor lizard).